The primary structure comprises 354 residues: MQHTLKKSDFFYELPEHLIARYPLQNRSDSRLLVAAVESAQKVHISNKQMIDFIDFLKPEDLLVINNTRVVPARMFGHKISGGKVEVFIERLLSEQRVKAHIRASKAPLLGSQIVIGAQKVTIEDKKDGIYTVFSEMPWTKLMAQQGKMPIPPYLARDAEALDSERYQTVYAQIAGAVAAPTAGLHFDQKLLERIAAKGVKRAAITLHVGAGTFQPVRVENLNEHVMHQEWFSLSQEVVDAVAACRAQNGRVIAIGTTALRALESAAIGSGKVGVFQGDTDLFITPGYEFQVVDALFTNFHLPESTLLMLVSAFAGVNNIRRIYQHAITEQYRFFSYGDAMFLPHRLPALETLL.

The protein belongs to the QueA family. As to quaternary structure, monomer.

The protein resides in the cytoplasm. It catalyses the reaction 7-aminomethyl-7-carbaguanosine(34) in tRNA + S-adenosyl-L-methionine = epoxyqueuosine(34) in tRNA + adenine + L-methionine + 2 H(+). Its pathway is tRNA modification; tRNA-queuosine biosynthesis. Functionally, transfers and isomerizes the ribose moiety from AdoMet to the 7-aminomethyl group of 7-deazaguanine (preQ1-tRNA) to give epoxyqueuosine (oQ-tRNA). This Dichelobacter nodosus (strain VCS1703A) protein is S-adenosylmethionine:tRNA ribosyltransferase-isomerase.